Consider the following 793-residue polypeptide: DnaJ homolog subfamily C member 10 (793 aa).

The first 32 residues, 1 to 32 (MGVWLNKDDYIRDLKRIILCFLIVYMAILVGT), serve as a signal peptide directing secretion. The region spanning 35-100 (DFYSLLGVSK…DLRKKYDKYG (66 aa)) is the J domain. The Thioredoxin 1 domain occupies 130–232 (EIITLERREF…ESLVSFAMQH (103 aa)). Residues Cys-158 and Cys-161 are joined by a disulfide bond. 2 trxb regions span residues 235 to 350 (STVT…LPDF) and 348 to 463 (PDFE…PQNF). 3 Thioredoxin domains span residues 454-553 (HVTT…IEDL), 557-662 (SVVS…SLRI), and 671-778 (VSTD…ISEK). Cysteines 480 and 483 form a disulfide. Asn-530 is a glycosylation site (N-linked (GlcNAc...) asparagine). 2 disulfides stabilise this stretch: Cys-588–Cys-591 and Cys-700–Cys-703. The Prevents secretion from ER motif lies at 790–793 (KDEL).

Interacts with EDEM1. Interacts with HSPA5 (via its J domain).

It localises to the endoplasmic reticulum lumen. Endoplasmic reticulum disulfide reductase involved both in the correct folding of proteins and degradation of misfolded proteins. Required for efficient folding of proteins in the endoplasmic reticulum by catalyzing the removal of non-native disulfide bonds formed during the folding of proteins, such as LDLR. Also involved in endoplasmic reticulum-associated degradation (ERAD) by reducing incorrect disulfide bonds in misfolded glycoproteins recognized by EDEM1. Interaction with HSPA5 is required its activity, not for the disulfide reductase activity, but to facilitate the release of DNAJC10 from its substrate. Promotes apoptotic signaling pathway in response to endoplasmic reticulum stress. The protein is DnaJ homolog subfamily C member 10 (DNAJC10) of Homo sapiens (Human).